Consider the following 356-residue polypeptide: MALSSPSRILCFALALSAASLSLSFASSHDYSIVGYSPEDLESHDKLIELFENWISNFEKAYETVEEKFLRFEVFKDNLKHIDETNKKGKSYWLGLNEFADLSHEEFKKMYLGLKTDIVRRDEERSYAEFAYRDVEAVPKSVDWRKKGAVAEVKNQGSCGSCWAFSTVAAVEGINKIVTGNLTTLSEQELIDCDTTYNNGCNGGLMDYAFEYIVKNGGLRKEEDYPYSMEEGTCEMQKDESETVTINGHQDVPTNDEKSLLKALAHQPLSVAIDASGREFQFYSGGVFDGRCGVDLDHGVAAVGYGSSKGSDYIIVKNSWGPKWGEKGYIRLKRNTGKPEGLCGINKMASFPTKTK.

The signal sequence occupies residues 1 to 26; the sequence is MALSSPSRILCFALALSAASLSLSFA. Positions 27–137 are cleaved as a propeptide — activation peptide; sequence SSHDYSIVGY…AEFAYRDVEA (111 aa). Intrachain disulfides connect Cys-159–Cys-201, Cys-193–Cys-234, and Cys-292–Cys-343. The active site involves Cys-162. The N-linked (GlcNAc...) asparagine glycan is linked to Asn-181. Active-site residues include His-298 and Asn-318.

Belongs to the peptidase C1 family. In terms of assembly, interacts with PRN2. Mostly expressed in roots, stems and flowers. Confined to tracheary elements, and specifically to xylem.

The protein resides in the vacuole. It localises to the cell membrane. Functionally, cysteine protease involved in xylem tracheary element (TE) autolysis during xylogenesis in roots. Participates in micro autolysis within the intact central vacuole before mega autolysis is initiated by tonoplast implosion. Involved in susceptibility to the bacterial plant pathogen Ralstonia solanacearum. This is Cysteine protease XCP2 from Arabidopsis thaliana (Mouse-ear cress).